The following is a 251-amino-acid chain: Tyrosine transport ATP-binding protein (251 aa).

Positions 2–248 (LQIKNLSKSF…TVEEILEKFE (247 aa)) constitute an ABC transporter domain. 39–46 (GSNGTGKS) serves as a coordination point for ATP.

This sequence belongs to the ABC transporter superfamily. The complex is probably composed of two ATP-binding proteins (CDR20291_0806), two transmembrane proteins (CDR20291_0807) and a solute-binding protein (CDR20291_0805).

It is found in the cell membrane. The enzyme catalyses L-tyrosine(out) + ATP + H2O = L-tyrosine(in) + ADP + phosphate + H(+). Functionally, probably part of an ABC transporter complex involved in tyrosine uptake. May also import phenylalanine. Probably responsible for energy coupling to the transport system. The polypeptide is Tyrosine transport ATP-binding protein (Clostridioides difficile (strain R20291) (Peptoclostridium difficile)).